Here is a 183-residue protein sequence, read N- to C-terminus: ATP-dependent protease subunit HslV (183 aa).

Threonine 13 is an active-site residue. Glycine 168, cysteine 171, and threonine 174 together coordinate Na(+).

Belongs to the peptidase T1B family. HslV subfamily. In terms of assembly, a double ring-shaped homohexamer of HslV is capped on each side by a ring-shaped HslU homohexamer. The assembly of the HslU/HslV complex is dependent on binding of ATP.

It is found in the cytoplasm. The enzyme catalyses ATP-dependent cleavage of peptide bonds with broad specificity.. With respect to regulation, allosterically activated by HslU binding. Functionally, protease subunit of a proteasome-like degradation complex believed to be a general protein degrading machinery. This is ATP-dependent protease subunit HslV from Xanthomonas axonopodis pv. citri (strain 306).